Reading from the N-terminus, the 561-residue chain is Lysine--tRNA ligase (561 aa).

Mg(2+) is bound by residues glutamate 409 and glutamate 416.

It belongs to the class-II aminoacyl-tRNA synthetase family. In terms of assembly, homodimer. It depends on Mg(2+) as a cofactor.

Its subcellular location is the cytoplasm. It carries out the reaction tRNA(Lys) + L-lysine + ATP = L-lysyl-tRNA(Lys) + AMP + diphosphate. The chain is Lysine--tRNA ligase from Nostoc punctiforme (strain ATCC 29133 / PCC 73102).